The sequence spans 211 residues: Imidazole glycerol phosphate synthase subunit HisH (211 aa).

The 211-residue stretch at 1–211 folds into the Glutamine amidotransferase type-1 domain; sequence MIGIIDYGMG…ASIIEGKGSM (211 aa). Cys79 serves as the catalytic Nucleophile. Active-site residues include His186 and Glu188.

As to quaternary structure, heterodimer of HisH and HisF.

The protein resides in the cytoplasm. The enzyme catalyses 5-[(5-phospho-1-deoxy-D-ribulos-1-ylimino)methylamino]-1-(5-phospho-beta-D-ribosyl)imidazole-4-carboxamide + L-glutamine = D-erythro-1-(imidazol-4-yl)glycerol 3-phosphate + 5-amino-1-(5-phospho-beta-D-ribosyl)imidazole-4-carboxamide + L-glutamate + H(+). It catalyses the reaction L-glutamine + H2O = L-glutamate + NH4(+). The protein operates within amino-acid biosynthesis; L-histidine biosynthesis; L-histidine from 5-phospho-alpha-D-ribose 1-diphosphate: step 5/9. IGPS catalyzes the conversion of PRFAR and glutamine to IGP, AICAR and glutamate. The HisH subunit catalyzes the hydrolysis of glutamine to glutamate and ammonia as part of the synthesis of IGP and AICAR. The resulting ammonia molecule is channeled to the active site of HisF. The protein is Imidazole glycerol phosphate synthase subunit HisH of Geobacillus sp. (strain WCH70).